The chain runs to 320 residues: Lipoyl synthase (320 aa).

Residues Cys67, Cys72, Cys78, Cys93, Cys97, Cys100, and Ser307 each contribute to the [4Fe-4S] cluster site. Positions 79 to 296 constitute a Radical SAM core domain; sequence FNHGTATFMI…RDKAEKMGFE (218 aa).

It belongs to the radical SAM superfamily. Lipoyl synthase family. The cofactor is [4Fe-4S] cluster.

The protein localises to the cytoplasm. The enzyme catalyses [[Fe-S] cluster scaffold protein carrying a second [4Fe-4S](2+) cluster] + N(6)-octanoyl-L-lysyl-[protein] + 2 oxidized [2Fe-2S]-[ferredoxin] + 2 S-adenosyl-L-methionine + 4 H(+) = [[Fe-S] cluster scaffold protein] + N(6)-[(R)-dihydrolipoyl]-L-lysyl-[protein] + 4 Fe(3+) + 2 hydrogen sulfide + 2 5'-deoxyadenosine + 2 L-methionine + 2 reduced [2Fe-2S]-[ferredoxin]. It functions in the pathway protein modification; protein lipoylation via endogenous pathway; protein N(6)-(lipoyl)lysine from octanoyl-[acyl-carrier-protein]: step 2/2. Its function is as follows. Catalyzes the radical-mediated insertion of two sulfur atoms into the C-6 and C-8 positions of the octanoyl moiety bound to the lipoyl domains of lipoate-dependent enzymes, thereby converting the octanoylated domains into lipoylated derivatives. In Histophilus somni (strain 129Pt) (Haemophilus somnus), this protein is Lipoyl synthase.